We begin with the raw amino-acid sequence, 864 residues long: Calphotin (864 aa).

The interval 816–858 is leucine-zipper; sequence LQTTDVSLLAIAATLDAIGEKLKDQKARNQQVMDRLCEIEKIL.

In terms of assembly, homodimer. In terms of tissue distribution, soma and axons of photoreceptor cells of compound eyes and ocelli.

The protein localises to the cytoplasm. Plays important roles in both rhabdomere development and in photoreceptor cell survival. Might function as a calcium-sequestering 'sponge' to regulate the amount of free cytoplasmic calcium. It binds 0.3 mole of Ca(2+) per mole of protein. The sequence is that of Calphotin (Cpn) from Drosophila melanogaster (Fruit fly).